Consider the following 126-residue polypeptide: Small ribosomal subunit protein bS6 (126 aa).

The interval 101–126 is disordered; sequence VMMKAKEERSAKREDAAPRAEEAAAE. The span at 104–126 shows a compositional bias: basic and acidic residues; the sequence is KAKEERSAKREDAAPRAEEAAAE.

This sequence belongs to the bacterial ribosomal protein bS6 family.

In terms of biological role, binds together with bS18 to 16S ribosomal RNA. The protein is Small ribosomal subunit protein bS6 of Aliivibrio fischeri (strain ATCC 700601 / ES114) (Vibrio fischeri).